A 161-amino-acid polypeptide reads, in one-letter code: RNA pyrophosphohydrolase (161 aa).

The 143-residue stretch at 12-154 folds into the Nudix hydrolase domain; it reads PYRPGVGMMI…KRKLYQAVVK (143 aa). The Nudix box motif lies at 46 to 67; the sequence is GGIVPGETPSIAAMREMLEEIG.

Belongs to the Nudix hydrolase family. RppH subfamily. A divalent metal cation serves as cofactor.

Accelerates the degradation of transcripts by removing pyrophosphate from the 5'-end of triphosphorylated RNA, leading to a more labile monophosphorylated state that can stimulate subsequent ribonuclease cleavage. The protein is RNA pyrophosphohydrolase of Rickettsia rickettsii (strain Iowa).